The primary structure comprises 220 residues: Urease accessory protein UreF (220 aa).

This sequence belongs to the UreF family. UreD, UreF and UreG form a complex that acts as a GTP-hydrolysis-dependent molecular chaperone, activating the urease apoprotein by helping to assemble the nickel containing metallocenter of UreC. The UreE protein probably delivers the nickel.

The protein localises to the cytoplasm. Its function is as follows. Required for maturation of urease via the functional incorporation of the urease nickel metallocenter. The protein is Urease accessory protein UreF of Bordetella parapertussis (strain 12822 / ATCC BAA-587 / NCTC 13253).